We begin with the raw amino-acid sequence, 156 residues long: Putative pre-16S rRNA nuclease (156 aa).

Belongs to the YqgF nuclease family.

It is found in the cytoplasm. Could be a nuclease involved in processing of the 5'-end of pre-16S rRNA. The sequence is that of Putative pre-16S rRNA nuclease from Ehrlichia canis (strain Jake).